The chain runs to 212 residues: Large ribosomal subunit protein uL3 (212 aa).

The disordered stretch occupies residues 134 to 155 (RNSHGNSLSHRAPGSIGQNQSP). Q153 bears the N5-methylglutamine mark.

It belongs to the universal ribosomal protein uL3 family. Part of the 50S ribosomal subunit. Forms a cluster with proteins L14 and L19. In terms of processing, methylated by PrmB.

Functionally, one of the primary rRNA binding proteins, it binds directly near the 3'-end of the 23S rRNA, where it nucleates assembly of the 50S subunit. The protein is Large ribosomal subunit protein uL3 of Pseudoalteromonas atlantica (strain T6c / ATCC BAA-1087).